Reading from the N-terminus, the 288-residue chain is MKDRTQELRSAKDSDDEEEVVHVDRDHFMDEFFEQVEEIRGCIEKLSEDVEQVKKQHSAILAAPNPDEKTKQELEDLTADIKKTANKVRSKLKAIEQSIEQEEGLNRSSADLRIRKTQHSTLSRKFVEVMTEYNATQSKYRDRCKDRIQRQLEITGRTTTNEELEDMLESGKLAIFTDDIKMDSQMTKQALNEIETRHNEIIKLETSIRELHDMFVDMAMLVESQGEMIDRIEYNVEHSVDYVERAVSDTKKAVKYQSKARRKKIMIIICCVVLGVVLASSIGGTLGL.

Positions 1-13 (MKDRTQELRSAKD) are enriched in basic and acidic residues. Residues 1 to 20 (MKDRTQELRSAKDSDDEEEV) are disordered. The Cytoplasmic segment spans residues 1 to 264 (MKDRTQELRS…KYQSKARRKK (264 aa)). Serine 10 and serine 14 each carry phosphoserine. Residues 29–104 (MDEFFEQVEE…IEQSIEQEEG (76 aa)) are a coiled coil. A t-SNARE coiled-coil homology domain is found at 191 to 253 (LNEIETRHNE…ERAVSDTKKA (63 aa)). Residues 265 to 288 (IMIIICCVVLGVVLASSIGGTLGL) form a helical; Anchor for type IV membrane protein membrane-spanning segment.

Belongs to the syntaxin family. Interacts with OTOF. Interacts with SYT6 and SYT8; the interaction is Ca(2+)-dependent. In terms of processing, phosphorylated by CK2.

It is found in the membrane. It localises to the nucleus. Its subcellular location is the cytoplasm. The protein resides in the cytoskeleton. The protein localises to the microtubule organizing center. It is found in the centrosome. It localises to the spindle. Functionally, potentially involved in docking of synaptic vesicles at presynaptic active zones. May mediate Ca(2+)-regulation of exocytosis acrosomal reaction in sperm. The polypeptide is Syntaxin-1B (STX1B) (Homo sapiens (Human)).